A 154-amino-acid polypeptide reads, in one-letter code: UPF0756 membrane protein BLi03063/BL00400 (154 aa).

4 helical membrane-spanning segments follow: residues 8–28, 54–74, 87–107, and 117–137; these read FLIL…IIAV, WGVT…EIGF, WIAL…ITLL, and LVFG…GPLI.

Belongs to the UPF0756 family.

It localises to the cell membrane. This chain is UPF0756 membrane protein BLi03063/BL00400, found in Bacillus licheniformis (strain ATCC 14580 / DSM 13 / JCM 2505 / CCUG 7422 / NBRC 12200 / NCIMB 9375 / NCTC 10341 / NRRL NRS-1264 / Gibson 46).